Here is a 193-residue protein sequence, read N- to C-terminus: Secreted RxLR effector protein 126 (193 aa).

The first 20 residues, 1–20 (MRYLLAVLIAAAFVISSGTS), serve as a signal peptide directing secretion. A RxLR-dEER motif is present at residues 50-64 (RMLQTKAVNGLEEER).

It belongs to the RxLR effector family.

It localises to the secreted. Its subcellular location is the host membrane. Its function is as follows. Secreted effector that completely suppresses the host cell death induced by cell death-inducing proteins. This is Secreted RxLR effector protein 126 from Plasmopara viticola (Downy mildew of grapevine).